Consider the following 101-residue polypeptide: uncharacterized protein (101 aa).

This is an uncharacterized protein from Mycobacterium tuberculosis (strain CDC 1551 / Oshkosh).